The chain runs to 272 residues: Ribosomal RNA small subunit methyltransferase J (272 aa).

S-adenosyl-L-methionine-binding positions include Arg-120–Asp-121, Glu-136–Arg-137, Ser-171–Ser-172, and Asp-188.

This sequence belongs to the methyltransferase superfamily. RsmJ family.

Its subcellular location is the cytoplasm. It catalyses the reaction guanosine(1516) in 16S rRNA + S-adenosyl-L-methionine = N(2)-methylguanosine(1516) in 16S rRNA + S-adenosyl-L-homocysteine + H(+). Functionally, specifically methylates the guanosine in position 1516 of 16S rRNA. The chain is Ribosomal RNA small subunit methyltransferase J from Colwellia psychrerythraea (strain 34H / ATCC BAA-681) (Vibrio psychroerythus).